The chain runs to 219 residues: Histone H1.01 (219 aa).

Composition is skewed to low complexity over residues 1–19 (MSET…GAKA) and 27–39 (AAGG…PAGP). Disordered regions lie at residues 1–40 (MSET…AGPS) and 94–219 (LVQT…AKKK). N-acetylserine is present on Ser-2. Positions 37–110 (AGPSVTELIT…GASGSFRLNK (74 aa)) constitute an H15 domain. Composition is skewed to basic residues over residues 119-134 (APRK…KPAA), 142-159 (KKPK…KAKK), 167-185 (KAAK…KKAA), and 192-219 (KAVK…AKKK).

It belongs to the histone H1/H5 family.

It localises to the nucleus. The protein localises to the chromosome. Histones H1 are necessary for the condensation of nucleosome chains into higher-order structures. The polypeptide is Histone H1.01 (Gallus gallus (Chicken)).